We begin with the raw amino-acid sequence, 442 residues long: Betaine reductase complex component B subunit alpha (442 aa).

Heterotetramer of two alpha and two beta subunits. Component of the betaine reductase complex, together with components A and C. PB is substrate specific.

The enzyme catalyses acetyl phosphate + trimethylamine + [thioredoxin]-disulfide + H2O = glycine betaine + [thioredoxin]-dithiol + phosphate + H(+). In terms of biological role, in the first step of betaine reductase, the substrate is bound to component PB via a Schiff base intermediate. Then the PB-activated substrate is nucleophilically attacked by the selenol anion of component PA to transform it to a carboxymethylated selenoether and the respective amine. By action of component PC, acetyl phosphate is formed, leaving component PA in its oxidized state. Finally component PA becomes reduced by the thioredoxin system to start a new catalytic cycle of reductive deamination. This is Betaine reductase complex component B subunit alpha (grdI) from Peptoclostridium acidaminophilum (Eubacterium acidaminophilum).